A 292-amino-acid polypeptide reads, in one-letter code: Diaminopimelate epimerase (292 aa).

2 residues coordinate substrate: N14 and N81. Catalysis depends on C90, which acts as the Proton donor. Substrate is bound by residues 91-92, N166, N202, and 220-221; these read GN and ER. Residue C229 is the Proton acceptor of the active site. Residue 230-231 coordinates substrate; sequence GT.

Belongs to the diaminopimelate epimerase family. Homodimer.

The protein localises to the cytoplasm. The enzyme catalyses (2S,6S)-2,6-diaminopimelate = meso-2,6-diaminopimelate. Its pathway is amino-acid biosynthesis; L-lysine biosynthesis via DAP pathway; DL-2,6-diaminopimelate from LL-2,6-diaminopimelate: step 1/1. In terms of biological role, catalyzes the stereoinversion of LL-2,6-diaminopimelate (L,L-DAP) to meso-diaminopimelate (meso-DAP), a precursor of L-lysine and an essential component of the bacterial peptidoglycan. The polypeptide is Diaminopimelate epimerase (Rhodococcus erythropolis (strain PR4 / NBRC 100887)).